We begin with the raw amino-acid sequence, 466 residues long: Fumarate hydratase class II (466 aa).

Residues serine 99–threonine 101, histidine 129–aspartate 132, serine 139–asparagine 141, and threonine 187 contribute to the substrate site. Histidine 188 functions as the Proton donor/acceptor in the catalytic mechanism. Serine 318 is an active-site residue. Substrate-binding positions include serine 319 and lysine 324–asparagine 326.

Belongs to the class-II fumarase/aspartase family. Fumarase subfamily. Homotetramer.

The protein resides in the cytoplasm. The catalysed reaction is (S)-malate = fumarate + H2O. Its pathway is carbohydrate metabolism; tricarboxylic acid cycle; (S)-malate from fumarate: step 1/1. Functionally, involved in the TCA cycle. Catalyzes the stereospecific interconversion of fumarate to L-malate. In Thermus aquaticus, this protein is Fumarate hydratase class II.